The following is a 371-amino-acid chain: Alginate lyase (371 aa).

The signal sequence occupies residues 1–26 (MQSTDLKRLLIPSLLGLAIVTGSAQA). Residues 67–68 (SK), 140–141 (HT), and Tyr-258 contribute to the substrate site.

This sequence belongs to the polysaccharide lyase 5 family.

Its subcellular location is the periplasm. It catalyses the reaction Eliminative cleavage of alginate to give oligosaccharides with 4-deoxy-alpha-L-erythro-hex-4-enuronosyl groups at their non-reducing ends and beta-D-mannuronate at their reducing end.. Functionally, catalyzes the depolymerization of alginate by cleaving the beta-1,4 glycosidic bond between two adjacent sugar residues via a beta-elimination mechanism. May serve to degrade mislocalized alginate that is trapped in the periplasmic space. This chain is Alginate lyase, found in Pseudomonas fluorescens (strain ATCC BAA-477 / NRRL B-23932 / Pf-5).